Consider the following 562-residue polypeptide: Formate--tetrahydrofolate ligase (562 aa).

71-78 (TPAGEGKS) contributes to the ATP binding site.

Belongs to the formate--tetrahydrofolate ligase family.

The enzyme catalyses (6S)-5,6,7,8-tetrahydrofolate + formate + ATP = (6R)-10-formyltetrahydrofolate + ADP + phosphate. Its pathway is one-carbon metabolism; tetrahydrofolate interconversion. The sequence is that of Formate--tetrahydrofolate ligase from Bacillus thuringiensis (strain Al Hakam).